Reading from the N-terminus, the 308-residue chain is Ribonuclease Z (308 aa).

Zn(2+)-binding residues include His-61, His-63, Asp-65, His-66, His-139, Asp-210, and His-268. The active-site Proton acceptor is Asp-65.

The protein belongs to the RNase Z family. In terms of assembly, homodimer. Requires Zn(2+) as cofactor.

It carries out the reaction Endonucleolytic cleavage of RNA, removing extra 3' nucleotides from tRNA precursor, generating 3' termini of tRNAs. A 3'-hydroxy group is left at the tRNA terminus and a 5'-phosphoryl group is left at the trailer molecule.. Functionally, zinc phosphodiesterase, which displays some tRNA 3'-processing endonuclease activity. Probably involved in tRNA maturation, by removing a 3'-trailer from precursor tRNA. In Halobacterium salinarum (strain ATCC 700922 / JCM 11081 / NRC-1) (Halobacterium halobium), this protein is Ribonuclease Z.